Here is a 300-residue protein sequence, read N- to C-terminus: Nucleotide-binding protein MCCL_0516 (300 aa).

15 to 22 (GMSGAGKS) is an ATP binding site. 66-69 (DLRG) serves as a coordination point for GTP.

This sequence belongs to the RapZ-like family.

In terms of biological role, displays ATPase and GTPase activities. This Macrococcus caseolyticus (strain JCSC5402) (Macrococcoides caseolyticum) protein is Nucleotide-binding protein MCCL_0516.